Here is a 909-residue protein sequence, read N- to C-terminus: Golgin subfamily A member 6-like protein 2 (909 aa).

Positions 1–11 (MWPQPHLPPHP) are enriched in pro residues. 5 disordered regions span residues 1–88 (MWPQ…ASHQ), 300–362 (ERLR…EQEE), 381–408 (QEKQMREQEQKMRDQEERMWEQDERLRE), 425–494 (KMRE…QRLP), and 524–909 (EEMW…QSSL). The segment covering 13 to 31 (MSEKTRQNKLAEAKKKFTD) has biased composition (basic and acidic residues). The segment covering 53 to 77 (NNGTNPETTTSEGCHSPEDTQQNRA) has biased composition (polar residues). Basic and acidic residues predominate over residues 78 to 88 (QLKEEKKASHQ). Positions 192 to 526 (HKKADRYIEE…EEKIRDQEEM (335 aa)) form a coiled coil. Basic and acidic residues-rich tracts occupy residues 425–478 (KMRE…KQEE) and 524–542 (EEMWGQEKKMWRQEKMREQ). The segment covering 607 to 620 (AGGEEDAGAGEEDM) has biased composition (acidic residues). Composition is skewed to gly residues over residues 641–654 (GGGGDDAGAGGEDA) and 676–689 (GAGGEDVGAGGEDV). Residues 692–719 (GRRRCGSSRGCRNRRRSCGNTRRCRSRR) show a composition bias toward basic residues. Low complexity predominate over residues 746–755 (AGAEDVAAGG). A compositionally biased stretch (acidic residues) spans 757–766 (DAGEEEDAGG). Positions 791–871 (GAGGEDVGAG…AGGEDVGAGG (81 aa)) are enriched in gly residues. The segment covering 872-892 (DAREGGEDTRSEREDAGEAAR) has biased composition (basic and acidic residues).

The protein belongs to the GOLGA6 family.

The chain is Golgin subfamily A member 6-like protein 2 (GOLGA6L2) from Homo sapiens (Human).